The following is a 42-amino-acid chain: Delta-hexatoxin-Iw1a (42 aa).

Cystine bridges form between C1/C15, C8/C20, C14/C31, and C16/C42.

Belongs to the neurotoxin 06 (delta-actx) family. Expressed by the venom gland.

It localises to the secreted. Inhibits tetrodotoxin-sensitive sodium channels by binding to site 3. It slows the inactivation, causes a prolongation of action potential duration resulting in repetitive firing in autonomic and motor nerve fibers. Does not depolarize the resting potential. Does not affect tetrodotoxin-resistant sodium channels. This lethal neurotoxin is active on both insect and mammalian voltage-gated sodium channels (Nav). The protein is Delta-hexatoxin-Iw1a of Illawarra wisharti (Illawarra funnel-web spider).